The chain runs to 414 residues: Transmembrane protein 184A (414 aa).

The segment at 1 to 32 is disordered; sequence MTDTPGLLGTPLAWTPPARPAGPQMERAGNGS. The next 7 helical transmembrane spans lie at 48–68, 83–103, 120–140, 177–197, 211–231, 248–268, and 290–310; these read VSGV…YLHL, LLFI…LLGG, FVIY…SAIM, LQFC…QAFG, LYIT…LFLF, FLTI…LAIL, and VAAG…SIAL. 2 disordered regions span residues 323 to 342 and 364 to 414; these read TESS…GLKE and YTQQ…AEEL. Positions 379–388 are enriched in polar residues; the sequence is SVPSPRTPTH.

Belongs to the TMEM184 family. Expressed in vascular cells (at protein level).

The protein localises to the cell membrane. The protein resides in the cytoplasm. It localises to the perinuclear region. It is found in the cytoplasmic vesicle membrane. Its subcellular location is the early endosome membrane. The protein localises to the endosome. The protein resides in the cytoplasmic vesicle. It localises to the secretory vesicle membrane. Acts as a heparin receptor in vascular cells. May be involved in vesicle transport in exocrine cells and Sertoli cells. In Bos taurus (Bovine), this protein is Transmembrane protein 184A (TMEM184A).